The following is a 210-amino-acid chain: Probable GTP-binding protein EngB (210 aa).

The EngB-type G domain maps to threonine 25–glutamate 199. GTP is bound by residues glycine 33 to serine 40, glycine 60 to leucine 64, aspartate 78 to glycine 81, threonine 145 to aspartate 148, and phenylalanine 178 to serine 180. Mg(2+) contacts are provided by serine 40 and threonine 62.

It belongs to the TRAFAC class TrmE-Era-EngA-EngB-Septin-like GTPase superfamily. EngB GTPase family. It depends on Mg(2+) as a cofactor.

Functionally, necessary for normal cell division and for the maintenance of normal septation. This is Probable GTP-binding protein EngB from Escherichia coli O6:H1 (strain CFT073 / ATCC 700928 / UPEC).